The chain runs to 164 residues: C-phycoerythrin alpha chain (164 aa).

2 residues coordinate (2R,3E)-phycoerythrobilin: C82 and C139.

The protein belongs to the phycobiliprotein family. In terms of assembly, heterodimer of an alpha and a beta chain. In terms of processing, contains two covalently linked bilin chromophores.

The protein resides in the cellular thylakoid membrane. Its function is as follows. Light-harvesting photosynthetic bile pigment-protein from the phycobiliprotein complex. This is C-phycoerythrin alpha chain (cpeA) from Synechocystis sp. (strain PCC 6701).